We begin with the raw amino-acid sequence, 855 residues long: Oxysterol-binding protein-related protein 3 (855 aa).

A disordered region spans residues 1 to 32; the sequence is MSDEKNLGVSQKLVSPSRSTSSCSSKQGSRQD. A phosphoserine mark is found at Ser15 and Ser33. The segment covering 15 to 31 has biased composition (low complexity); that stretch reads SPSRSTSSCSSKQGSRQ. The PH domain maps to 50-145; it reads PPVQKGFLLK…WVSKLRHHRM (96 aa). An FFAT 1 motif is present at residues 161-167; the sequence is FFSGSSV. Phosphoserine is present on residues Ser199, Ser250, Ser272, Ser277, Ser288, Ser291, Ser340, Ser393, Ser405, and Ser408. The disordered stretch occupies residues 274–293; that stretch reads PNLSTLDFGEEKSYSDGSEA. Residues 377–396 form a disordered region; sequence DPPAVPKPGDNLAEENSRDE. Residues 450–454 carry the FFAT 2 motif; the sequence is LSLDN. The tract at residues 468 to 490 is disordered; that stretch reads PVLESSGEARSKRRTSLPAPGPN.

Belongs to the OSBP family. As to quaternary structure, homodimer. Interacts with RRAS. Interacts (phosphorylated form) with VAPA. Interacts with OSBPL6. Post-translationally, phosphorylation is enhanced in vitro by phorbol-12-myristate-13-acetate (PMA), forskolin and calcium ionophore A23187. Phosphorylation seems to be stimulated in conditions of low cell-cell (or cell-matrix) adhesion. Expressed in spinal ganglia. Expressed in a subset of small lymphocytes (at protein level).

The protein resides in the endoplasmic reticulum membrane. The protein localises to the cytoplasm. It is found in the cytosol. Its subcellular location is the cell membrane. It localises to the cell projection. The protein resides in the filopodium tip. The protein localises to the nucleus membrane. Functionally, phosphoinositide-binding protein which associates with both cell and endoplasmic reticulum (ER) membranes. Can bind to the ER membrane protein VAPA and recruit VAPA to plasma membrane sites, thus linking these intracellular compartments. The ORP3-VAPA complex stimulates RRAS signaling which in turn attenuates integrin beta-1 (ITGB1) activation at the cell surface. With VAPA, may regulate ER morphology. Has a role in regulation of the actin cytoskeleton, cell polarity and cell adhesion. Binds to phosphoinositides with preference for PI(3,4)P2 and PI(3,4,5)P3. Also binds 25-hydroxycholesterol and cholesterol. The polypeptide is Oxysterol-binding protein-related protein 3 (Osbpl3) (Mus musculus (Mouse)).